A 510-amino-acid polypeptide reads, in one-letter code: NAD(P)H-quinone oxidoreductase subunit 2, chloroplastic (510 aa).

12 helical membrane-spanning segments follow: residues 24-44 (LLLF…GLIL), 59-79 (WFYF…LFRW), 99-119 (IFQF…VEYI), 124-144 (MAIT…MFLC), 149-169 (LITI…LSGY), 183-203 (YLLM…WLYG), 229-249 (ISIA…PAPF), 295-315 (WHLL…LIAI), 323-343 (MLAY…IVGD), 354-374 (YMLF…LFGL), 395-415 (ALSS…AGFF), and 418-438 (LYLF…IGLL).

The protein belongs to the complex I subunit 2 family. As to quaternary structure, NDH is composed of at least 16 different subunits, 5 of which are encoded in the nucleus.

The protein resides in the plastid. The protein localises to the chloroplast thylakoid membrane. The catalysed reaction is a plastoquinone + NADH + (n+1) H(+)(in) = a plastoquinol + NAD(+) + n H(+)(out). The enzyme catalyses a plastoquinone + NADPH + (n+1) H(+)(in) = a plastoquinol + NADP(+) + n H(+)(out). Functionally, NDH shuttles electrons from NAD(P)H:plastoquinone, via FMN and iron-sulfur (Fe-S) centers, to quinones in the photosynthetic chain and possibly in a chloroplast respiratory chain. The immediate electron acceptor for the enzyme in this species is believed to be plastoquinone. Couples the redox reaction to proton translocation, and thus conserves the redox energy in a proton gradient. The sequence is that of NAD(P)H-quinone oxidoreductase subunit 2, chloroplastic from Ananas comosus (Pineapple).